A 427-amino-acid polypeptide reads, in one-letter code: Glutamate-1-semialdehyde 2,1-aminomutase (427 aa).

N6-(pyridoxal phosphate)lysine is present on Lys-267.

It belongs to the class-III pyridoxal-phosphate-dependent aminotransferase family. HemL subfamily. As to quaternary structure, homodimer. Requires pyridoxal 5'-phosphate as cofactor.

The protein localises to the cytoplasm. The catalysed reaction is (S)-4-amino-5-oxopentanoate = 5-aminolevulinate. The protein operates within porphyrin-containing compound metabolism; protoporphyrin-IX biosynthesis; 5-aminolevulinate from L-glutamyl-tRNA(Glu): step 2/2. The polypeptide is Glutamate-1-semialdehyde 2,1-aminomutase (Geotalea daltonii (strain DSM 22248 / JCM 15807 / FRC-32) (Geobacter daltonii)).